The primary structure comprises 250 residues: Ubiquinone/menaquinone biosynthesis C-methyltransferase UbiE (250 aa).

Residues Thr-74, Asp-94, 122 to 123 (DA), and Ser-139 contribute to the S-adenosyl-L-methionine site.

It belongs to the class I-like SAM-binding methyltransferase superfamily. MenG/UbiE family.

It carries out the reaction a 2-demethylmenaquinol + S-adenosyl-L-methionine = a menaquinol + S-adenosyl-L-homocysteine + H(+). The catalysed reaction is a 2-methoxy-6-(all-trans-polyprenyl)benzene-1,4-diol + S-adenosyl-L-methionine = a 5-methoxy-2-methyl-3-(all-trans-polyprenyl)benzene-1,4-diol + S-adenosyl-L-homocysteine + H(+). The protein operates within quinol/quinone metabolism; menaquinone biosynthesis; menaquinol from 1,4-dihydroxy-2-naphthoate: step 2/2. Its pathway is cofactor biosynthesis; ubiquinone biosynthesis. Methyltransferase required for the conversion of demethylmenaquinol (DMKH2) to menaquinol (MKH2) and the conversion of 2-polyprenyl-6-methoxy-1,4-benzoquinol (DDMQH2) to 2-polyprenyl-3-methyl-6-methoxy-1,4-benzoquinol (DMQH2). In Ruegeria sp. (strain TM1040) (Silicibacter sp.), this protein is Ubiquinone/menaquinone biosynthesis C-methyltransferase UbiE.